A 528-amino-acid polypeptide reads, in one-letter code: GMP synthase [glutamine-hydrolyzing] (528 aa).

The Glutamine amidotransferase type-1 domain occupies 3–199 (KVAIIDFGSQ…FLDIAGCQKD (197 aa)). C83 serves as the catalytic Nucleophile. Active-site residues include H174 and E176. The GMPS ATP-PPase domain maps to 200-394 (WTVTSFIDDQ…LGISTEILMR (195 aa)). Residue 227–233 (SGGVDSS) coordinates ATP.

As to quaternary structure, homodimer.

It carries out the reaction XMP + L-glutamine + ATP + H2O = GMP + L-glutamate + AMP + diphosphate + 2 H(+). It participates in purine metabolism; GMP biosynthesis; GMP from XMP (L-Gln route): step 1/1. In terms of biological role, catalyzes the synthesis of GMP from XMP. This chain is GMP synthase [glutamine-hydrolyzing], found in Ehrlichia ruminantium (strain Welgevonden).